The sequence spans 367 residues: tRNA-specific 2-thiouridylase MnmA (367 aa).

Residues 10–17 (AMSGGVDS) and Met36 each bind ATP. Cys106 serves as the catalytic Nucleophile. A disulfide bond links Cys106 and Cys204. Gly130 is a binding site for ATP. The interaction with tRNA stretch occupies residues 154–156 (KDQ). Cys204 functions as the Cysteine persulfide intermediate in the catalytic mechanism. Residues 310 to 311 (RY) are interaction with tRNA.

It belongs to the MnmA/TRMU family.

The protein resides in the cytoplasm. The catalysed reaction is S-sulfanyl-L-cysteinyl-[protein] + uridine(34) in tRNA + AH2 + ATP = 2-thiouridine(34) in tRNA + L-cysteinyl-[protein] + A + AMP + diphosphate + H(+). Catalyzes the 2-thiolation of uridine at the wobble position (U34) of tRNA, leading to the formation of s(2)U34. The sequence is that of tRNA-specific 2-thiouridylase MnmA from Desulforamulus reducens (strain ATCC BAA-1160 / DSM 100696 / MI-1) (Desulfotomaculum reducens).